We begin with the raw amino-acid sequence, 232 residues long: Large ribosomal subunit protein uL16m (232 aa).

The N-terminal 41 residues, 1-41, are a transit peptide targeting the mitochondrion; sequence MFPYLTRMNLSIKMGGLTLKESSPNAFLNNTTIARRFKHEY.

Belongs to the universal ribosomal protein uL16 family. In terms of assembly, component of the mitochondrial large ribosomal subunit (mt-LSU). Mature yeast 74S mitochondrial ribosomes consist of a small (37S) and a large (54S) subunit. The 37S small subunit contains a 15S ribosomal RNA (15S mt-rRNA) and 34 different proteins. The 54S large subunit contains a 21S rRNA (21S mt-rRNA) and 46 different proteins.

The protein localises to the mitochondrion. Component of the mitochondrial ribosome (mitoribosome), a dedicated translation machinery responsible for the synthesis of mitochondrial genome-encoded proteins, including at least some of the essential transmembrane subunits of the mitochondrial respiratory chain. The mitoribosomes are attached to the mitochondrial inner membrane and translation products are cotranslationally integrated into the membrane. In Saccharomyces cerevisiae (strain ATCC 204508 / S288c) (Baker's yeast), this protein is Large ribosomal subunit protein uL16m (MRPL16).